Here is a 628-residue protein sequence, read N- to C-terminus: Biosynthetic arginine decarboxylase (628 aa).

N6-(pyridoxal phosphate)lysine is present on Lys99. 279–289 (VDVGGGLGIDY) is a substrate binding site.

The protein belongs to the Orn/Lys/Arg decarboxylase class-II family. SpeA subfamily. It depends on Mg(2+) as a cofactor. Pyridoxal 5'-phosphate is required as a cofactor.

The catalysed reaction is L-arginine + H(+) = agmatine + CO2. It functions in the pathway amine and polyamine biosynthesis; agmatine biosynthesis; agmatine from L-arginine: step 1/1. Catalyzes the biosynthesis of agmatine from arginine. This chain is Biosynthetic arginine decarboxylase, found in Xylella fastidiosa (strain M23).